We begin with the raw amino-acid sequence, 41 residues long: Augerpeptide hhe6.1 (41 aa).

Cystine bridges form between cysteine 11–cysteine 32, cysteine 18–cysteine 35, and cysteine 31–cysteine 40.

Expressed by the venom duct.

The protein localises to the secreted. The chain is Augerpeptide hhe6.1 from Hastula hectica (Sea snail).